A 212-amino-acid chain; its full sequence is ATP phosphoribosyltransferase (212 aa).

This sequence belongs to the ATP phosphoribosyltransferase family. Short subfamily. Heteromultimer composed of HisG and HisZ subunits.

The protein localises to the cytoplasm. It catalyses the reaction 1-(5-phospho-beta-D-ribosyl)-ATP + diphosphate = 5-phospho-alpha-D-ribose 1-diphosphate + ATP. The protein operates within amino-acid biosynthesis; L-histidine biosynthesis; L-histidine from 5-phospho-alpha-D-ribose 1-diphosphate: step 1/9. Its function is as follows. Catalyzes the condensation of ATP and 5-phosphoribose 1-diphosphate to form N'-(5'-phosphoribosyl)-ATP (PR-ATP). Has a crucial role in the pathway because the rate of histidine biosynthesis seems to be controlled primarily by regulation of HisG enzymatic activity. The protein is ATP phosphoribosyltransferase of Albidiferax ferrireducens (strain ATCC BAA-621 / DSM 15236 / T118) (Rhodoferax ferrireducens).